We begin with the raw amino-acid sequence, 384 residues long: Guanine nucleotide-binding protein alpha-1 subunit (384 aa).

Gly2 carries the N-myristoyl glycine lipid modification. Residue Cys5 is the site of S-palmitoyl cysteine attachment. The 347-residue stretch at 38 to 384 (HIQKLLLLGA…RRNLFEAGLL (347 aa)) folds into the G-alpha domain. The segment at 41-54 (KLLLLGAGESGKST) is G1 motif. 14 residues coordinate GTP: Glu49, Ser50, Gly51, Lys52, Ser53, Thr54, Leu188, Tyr189, Thr194, Gly222, Asn288, Lys289, Asp291, and Ala356. Ser53 contacts Mg(2+). Residues 186 to 194 (DVLYARVRT) are G2 motif. Position 194 (Thr194) interacts with Mg(2+). Residues 215 to 224 (YRLFDVGGQR) are G3 motif. A G4 motif region spans residues 284–291 (MLFLNKFD). Residues 354-359 (TTALDQ) are G5 motif.

The protein belongs to the G-alpha family. As to quaternary structure, g proteins are composed of 3 units; alpha, beta and gamma. The alpha chain contains the guanine nucleotide binding site. Mg(2+) serves as cofactor.

In terms of biological role, guanine nucleotide-binding proteins (G proteins) are involved as modulators or transducers in various transmembrane signaling systems. The chain is Guanine nucleotide-binding protein alpha-1 subunit (GPA1) from Lupinus luteus (European yellow lupine).